Here is a 717-residue protein sequence, read N- to C-terminus: Ferric reduction oxidase 3, mitochondrial (717 aa).

The transit peptide at methionine 1–tyrosine 23 directs the protein to the mitochondrion. Transmembrane regions (helical) follow at residues leucine 40–serine 59, leucine 86–leucine 104, leucine 140–alanine 163, tyrosine 232–tryptophan 255, threonine 306–phenylalanine 330, and leucine 353–methionine 373. The Ferric oxidoreductase domain occupies glycine 198 to phenylalanine 317. Positions 233, 247, 307, and 320 each coordinate heme. Residues glutamine 346 to aspartate 451 form the FAD-binding FR-type domain. Histidine 395–threonine 398 is a binding site for FAD. An NAD(+)-binding site is contributed by glycine 443 to glycine 446. The next 2 helical transmembrane spans lie at tryptophan 564–serine 586 and serine 606–cysteine 627.

This sequence belongs to the ferric reductase (FRE) family. FAD serves as cofactor. Expressed in root steele. Detected in shoots, leaves, stems, siliques, flowers and cotyledons.

The protein localises to the mitochondrion membrane. The enzyme catalyses 2 a Fe(II)-siderophore + NAD(+) + H(+) = 2 a Fe(III)-siderophore + NADH. Functionally, ferric chelate reductase involved in iron reduction in roots. May participate in the transport of electrons to a Fe(3+) ion via FAD and heme intermediates. This Arabidopsis thaliana (Mouse-ear cress) protein is Ferric reduction oxidase 3, mitochondrial (FRO3).